A 453-amino-acid chain; its full sequence is Pre-mRNA-splicing factor prp46 (453 aa).

Residues 62–71 are compositionally biased toward low complexity; it reads EKQAKAAAAG. The interval 62 to 129 is disordered; the sequence is EKQAKAAAAG…PSATRQQRPD (68 aa). WD repeat units follow at residues 142–181, 184–223, 226–265, 268–309, 311–350, 351–389, and 400–439; these read GHLG…LRLT, GHIS…VIRH, GHLS…NIHV, GHKG…GVLT, HKKG…QNFE, GHNA…KFQS, and DAEA…TPES. Positions 432–453 are disordered; that stretch reads DDEATPESHPVTWAPTLGRQRY.

This sequence belongs to the WD repeat PRL1/PRL2 family. Associated with the spliceosome.

The protein localises to the cytoplasm. It localises to the nucleus. Functionally, involved in pre-mRNA splicing and required for cell cycle progression at G2/M. This is Pre-mRNA-splicing factor prp46 (prp46) from Aspergillus fumigatus (strain ATCC MYA-4609 / CBS 101355 / FGSC A1100 / Af293) (Neosartorya fumigata).